Consider the following 533-residue polypeptide: Tyrosine protein-kinase src-1 (533 aa).

Residue Gly2 is the site of N-myristoyl glycine attachment. The SH3 domain occupies Gln71–Thr132. In terms of domain architecture, SH2 spans Trp138–Ala237. One can recognise a Protein kinase domain in the interval Leu262–Phe521. ATP contacts are provided by residues Leu268 to Val276 and Lys290. The active-site Proton acceptor is the Asp381. The residue at position 416 (Tyr416) is a Phosphotyrosine; by autocatalysis. Tyr528 carries the phosphotyrosine modification.

It belongs to the protein kinase superfamily. Tyr protein kinase family. SRC subfamily. Interacts (via SH2 domain and SH3 domain) with unc-5 (via cytoplasmic domain); the interaction requires kinase activity. Interacts (when activated and phosphorylated at 'Tyr-416') with ina-1 (via cytoplasmic domain) and with ced-2 (via SH2 domain). Mg(2+) serves as cofactor. Requires Mn(2+) as cofactor. May be phosphorylated on Tyr-528 by csk-1. In terms of tissue distribution, expressed in some neurons (ASE, ADF, AVA, AUA, RMDV and BAG) in the head region, anchor cell, vulva, cells around anus, body wall muscle, pharyngeal muscles in procorpus and metacorpus. Expressed in gonadal distal tip cells.

It is found in the cell membrane. It localises to the cell projection. The protein localises to the phagocytic cup. It carries out the reaction L-tyrosyl-[protein] + ATP = O-phospho-L-tyrosyl-[protein] + ADP + H(+). May be activated by autophosphorylation. May be inhibited by csk-1-mediated phosphorylation. Its function is as follows. Non-receptor tyrosine-protein kinase which plays a role in endoderm development by controlling spindle orientation in EMS blastomere, probably downstream of receptor mes-1. Also involved in embryonic body morphogenesis, especially in the formation of the pharynx and the intestine. May be dispensable for pharyngeal muscle organization in the adult. Probably phosphorylates netrin receptor unc-5, to regulate distal tip cell (DTC) migration during gonad development and in axon repulsion. Plays a role in the migration of the QR neuroblast, a precursor of the AVM neuron, and in the migration of the axon cone of AVM, ALM, CAN and PVM neurons. May act downstream of migratory protein mig-13 to control AVM neuron migration. Probably downstream of integrin ina-1/pat-3, plays a role in the clearance of apoptotic cells during mid-embryogenesis. Phosphorylates ced-1 at 'Tyr-1019' which promotes ced-1 proteasomal degradation, maintaining appropriate ced-1 levels for apoptotic cell clearance. This chain is Tyrosine protein-kinase src-1, found in Caenorhabditis elegans.